The primary structure comprises 23 residues: Alpha-conotoxin-like RgIB (23 aa).

2 disulfides stabilise this stretch: C5/C11 and C6/C19. The interval 7-9 is lacks the Ser-Xaa-Pro motif that is crucial for potent interaction with nAChR; that stretch reads KNP.

In terms of tissue distribution, expressed by venom duct.

It localises to the secreted. Alpha-conotoxins act on postsynaptic membranes, they bind to the nicotinic acetylcholine receptors (nAChR) and thus inhibit them. Is a specific blocker of the alpha-3-beta-4/CHRNA3-CHRNB4 image nAChR and may also block alpha-3-beta-4-alpha-5 (CHRNA3-CHRNB4-CHRNA5) channels. Has possibly a distinct nAChR binding mode from other alpha-conotoxins, due to a different three residue motif (lacks the Ser-Xaa-Pro motif). In vivo, causes hyperactivity and behavioral disorders in mice following intracranial injection. This Conus regius (Crown cone) protein is Alpha-conotoxin-like RgIB.